The chain runs to 689 residues: Glycine--tRNA ligase beta subunit (689 aa).

Belongs to the class-II aminoacyl-tRNA synthetase family. As to quaternary structure, tetramer of two alpha and two beta subunits.

It localises to the cytoplasm. It catalyses the reaction tRNA(Gly) + glycine + ATP = glycyl-tRNA(Gly) + AMP + diphosphate. The protein is Glycine--tRNA ligase beta subunit of Photorhabdus laumondii subsp. laumondii (strain DSM 15139 / CIP 105565 / TT01) (Photorhabdus luminescens subsp. laumondii).